The following is a 335-amino-acid chain: tRNA N6-adenosine threonylcarbamoyltransferase (335 aa).

Residues His109, His113, and Tyr130 each contribute to the a divalent metal cation site. Substrate-binding positions include 130–134 (YVSGG), Asp162, Gly177, Glu181, and Asn266. Position 294 (Asp294) interacts with a divalent metal cation.

Belongs to the KAE1 / TsaD family. In terms of assembly, component of the EKC/KEOPS complex composed of at least GON7, TP53RK, TPRKB, OSGEP and LAGE3; the whole complex dimerizes. Requires a divalent metal cation as cofactor.

It is found in the cytoplasm. The protein localises to the nucleus. The catalysed reaction is L-threonylcarbamoyladenylate + adenosine(37) in tRNA = N(6)-L-threonylcarbamoyladenosine(37) in tRNA + AMP + H(+). Its function is as follows. Component of the EKC/KEOPS complex that is required for the formation of a threonylcarbamoyl group on adenosine at position 37 (t(6)A37) in tRNAs that read codons beginning with adenine. The complex is probably involved in the transfer of the threonylcarbamoyl moiety of threonylcarbamoyl-AMP (TC-AMP) to the N6 group of A37. OSGEP likely plays a direct catalytic role in this reaction, but requires other protein(s) of the complex to fulfill this activity. The polypeptide is tRNA N6-adenosine threonylcarbamoyltransferase (Bos taurus (Bovine)).